The following is a 455-amino-acid chain: Probable glycine dehydrogenase (decarboxylating) subunit 1 (455 aa).

The protein belongs to the GcvP family. N-terminal subunit subfamily. The glycine cleavage system is composed of four proteins: P, T, L and H. In this organism, the P 'protein' is a heterodimer of two subunits.

The catalysed reaction is N(6)-[(R)-lipoyl]-L-lysyl-[glycine-cleavage complex H protein] + glycine + H(+) = N(6)-[(R)-S(8)-aminomethyldihydrolipoyl]-L-lysyl-[glycine-cleavage complex H protein] + CO2. Functionally, the glycine cleavage system catalyzes the degradation of glycine. The P protein binds the alpha-amino group of glycine through its pyridoxal phosphate cofactor; CO(2) is released and the remaining methylamine moiety is then transferred to the lipoamide cofactor of the H protein. This Francisella tularensis subsp. tularensis (strain FSC 198) protein is Probable glycine dehydrogenase (decarboxylating) subunit 1.